The following is a 181-amino-acid chain: Shikimate kinase (181 aa).

Position 11–16 (11–16 (GAGKSK)) interacts with ATP. S15 contributes to the Mg(2+) binding site. Residues D33, R58, and G80 each contribute to the substrate site. R128 contributes to the ATP binding site. A substrate-binding site is contributed by R144.

Belongs to the shikimate kinase family. In terms of assembly, monomer. Requires Mg(2+) as cofactor.

It is found in the cytoplasm. It catalyses the reaction shikimate + ATP = 3-phosphoshikimate + ADP + H(+). The protein operates within metabolic intermediate biosynthesis; chorismate biosynthesis; chorismate from D-erythrose 4-phosphate and phosphoenolpyruvate: step 5/7. Catalyzes the specific phosphorylation of the 3-hydroxyl group of shikimic acid using ATP as a cosubstrate. This Leptospira biflexa serovar Patoc (strain Patoc 1 / Ames) protein is Shikimate kinase.